The chain runs to 434 residues: Citrate synthase (434 aa).

Residues histidine 310 and aspartate 368 contribute to the active site.

This sequence belongs to the citrate synthase family.

It carries out the reaction oxaloacetate + acetyl-CoA + H2O = citrate + CoA + H(+). It functions in the pathway carbohydrate metabolism; tricarboxylic acid cycle; isocitrate from oxaloacetate: step 1/2. The protein is Citrate synthase (gltA) of Bradyrhizobium diazoefficiens (strain JCM 10833 / BCRC 13528 / IAM 13628 / NBRC 14792 / USDA 110).